The sequence spans 367 residues: Flagellar P-ring protein (367 aa).

Residues 1 to 22 (MRRMLVIRWILAIHLIATQVFA) form the signal peptide.

This sequence belongs to the FlgI family. The basal body constitutes a major portion of the flagellar organelle and consists of four rings (L,P,S, and M) mounted on a central rod.

The protein localises to the periplasm. Its subcellular location is the bacterial flagellum basal body. Functionally, assembles around the rod to form the L-ring and probably protects the motor/basal body from shearing forces during rotation. In Legionella pneumophila (strain Lens), this protein is Flagellar P-ring protein.